The primary structure comprises 276 residues: Large ribosomal subunit protein uL2 (276 aa).

Disordered stretches follow at residues 1 to 58 (MAIR…GGGH) and 218 to 276 (RPIT…KNRK). Residues 16–27 (ASVSDFSDLTRS) show a composition bias toward polar residues. Residues 255–276 (RRPKKASNKMIVRRRPNGKNRK) show a composition bias toward basic residues.

The protein belongs to the universal ribosomal protein uL2 family. As to quaternary structure, part of the 50S ribosomal subunit. Forms a bridge to the 30S subunit in the 70S ribosome.

One of the primary rRNA binding proteins. Required for association of the 30S and 50S subunits to form the 70S ribosome, for tRNA binding and peptide bond formation. It has been suggested to have peptidyltransferase activity; this is somewhat controversial. Makes several contacts with the 16S rRNA in the 70S ribosome. This is Large ribosomal subunit protein uL2 from Bifidobacterium animalis subsp. lactis (strain AD011).